The primary structure comprises 238 residues: Small ribosomal subunit protein eS4 (238 aa).

In terms of domain architecture, S4 RNA-binding spans 38-100 (LPLAIVIRDV…TGEVYRVVPD (63 aa)).

Belongs to the eukaryotic ribosomal protein eS4 family.

The polypeptide is Small ribosomal subunit protein eS4 (Pyrobaculum arsenaticum (strain DSM 13514 / JCM 11321 / PZ6)).